We begin with the raw amino-acid sequence, 338 residues long: Tetraacyldisaccharide 4'-kinase (338 aa).

51–58 (HVGGAGKT) serves as a coordination point for ATP.

It belongs to the LpxK family.

The catalysed reaction is a lipid A disaccharide + ATP = a lipid IVA + ADP + H(+). It participates in glycolipid biosynthesis; lipid IV(A) biosynthesis; lipid IV(A) from (3R)-3-hydroxytetradecanoyl-[acyl-carrier-protein] and UDP-N-acetyl-alpha-D-glucosamine: step 6/6. Functionally, transfers the gamma-phosphate of ATP to the 4'-position of a tetraacyldisaccharide 1-phosphate intermediate (termed DS-1-P) to form tetraacyldisaccharide 1,4'-bis-phosphate (lipid IVA). The protein is Tetraacyldisaccharide 4'-kinase of Bradyrhizobium diazoefficiens (strain JCM 10833 / BCRC 13528 / IAM 13628 / NBRC 14792 / USDA 110).